The chain runs to 279 residues: Very long chain fatty acid elongase 1 (279 aa).

The residue at position 1 (Met1) is an N-acetylmethionine. 7 helical membrane passes run 23 to 43, 61 to 81, 110 to 130, 137 to 154, 176 to 196, 203 to 223, and 231 to 251; these read PLMG…YFIL, FMIV…YEFL, VAWL…IFIL, VTFL…SWWW, VVMY…PYLW, AIQL…YFMP, and IIIH…SNFW. The Di-lysine motif signature appears at 275–279; the sequence is KVKAN.

The protein belongs to the ELO family. ELOVL1 subfamily. In terms of assembly, interacts with LASS2, TECR and HSD17B12. Interacts with TECR. Expressed in a broad variety of tissues. Highly expressed in stomach, lung, kidney, skin and intestine. Moderately expressed in white adipose tissue, liver, spleen, brain, brown adipose tissue, heart and muscle. Weakly expressed in testis.

The protein resides in the endoplasmic reticulum membrane. It carries out the reaction a very-long-chain acyl-CoA + malonyl-CoA + H(+) = a very-long-chain 3-oxoacyl-CoA + CO2 + CoA. It catalyses the reaction eicosanoyl-CoA + malonyl-CoA + H(+) = 3-oxodocosanoyl-CoA + CO2 + CoA. The catalysed reaction is docosanoyl-CoA + malonyl-CoA + H(+) = 3-oxotetracosanoyl-CoA + CO2 + CoA. The enzyme catalyses tetracosanoyl-CoA + malonyl-CoA + H(+) = 3-oxohexacosanoyl-CoA + CO2 + CoA. It carries out the reaction (11Z)-eicosenoyl-CoA + malonyl-CoA + H(+) = 3-oxo-(13Z)-docosenoyl-CoA + CO2 + CoA. It catalyses the reaction (13Z)-docosenoyl-CoA + malonyl-CoA + H(+) = 3-oxo-(15Z)-tetracosenoyl-CoA + CO2 + CoA. It participates in lipid metabolism; fatty acid biosynthesis. Its function is as follows. Catalyzes the first and rate-limiting reaction of the four reactions that constitute the long-chain fatty acids elongation cycle. This endoplasmic reticulum-bound enzymatic process allows the addition of 2 carbons to the chain of long- and very long-chain fatty acids (VLCFAs) per cycle. Condensing enzyme that exhibits activity toward saturated and monounsaturated acyl-CoA substrates, with the highest activity towards C22:0 acyl-CoA. May participate in the production of both saturated and monounsaturated VLCFAs of different chain lengths that are involved in multiple biological processes as precursors of membrane lipids and lipid mediators. Important for saturated C24:0 and monounsaturated C24:1 sphingolipid synthesis. Indirectly inhibits RPE65 via production of VLCFAs. In Mus musculus (Mouse), this protein is Very long chain fatty acid elongase 1.